The sequence spans 85 residues: uncharacterized protein (85 aa).

This is an uncharacterized protein from Escherichia coli (strain K12).